We begin with the raw amino-acid sequence, 180 residues long: Crossover junction endodeoxyribonuclease RuvC (180 aa).

Active-site residues include Asp7, Glu66, and Asp138. The Mg(2+) site is built by Asp7, Glu66, and Asp138.

It belongs to the RuvC family. As to quaternary structure, homodimer which binds Holliday junction (HJ) DNA. The HJ becomes 2-fold symmetrical on binding to RuvC with unstacked arms; it has a different conformation from HJ DNA in complex with RuvA. In the full resolvosome a probable DNA-RuvA(4)-RuvB(12)-RuvC(2) complex forms which resolves the HJ. It depends on Mg(2+) as a cofactor.

It is found in the cytoplasm. It catalyses the reaction Endonucleolytic cleavage at a junction such as a reciprocal single-stranded crossover between two homologous DNA duplexes (Holliday junction).. Its function is as follows. The RuvA-RuvB-RuvC complex processes Holliday junction (HJ) DNA during genetic recombination and DNA repair. Endonuclease that resolves HJ intermediates. Cleaves cruciform DNA by making single-stranded nicks across the HJ at symmetrical positions within the homologous arms, yielding a 5'-phosphate and a 3'-hydroxyl group; requires a central core of homology in the junction. The consensus cleavage sequence is 5'-(A/T)TT(C/G)-3'. Cleavage occurs on the 3'-side of the TT dinucleotide at the point of strand exchange. HJ branch migration catalyzed by RuvA-RuvB allows RuvC to scan DNA until it finds its consensus sequence, where it cleaves and resolves the cruciform DNA. This is Crossover junction endodeoxyribonuclease RuvC from Burkholderia vietnamiensis (strain G4 / LMG 22486) (Burkholderia cepacia (strain R1808)).